The sequence spans 540 residues: 2-isopropylmalate synthase (540 aa).

The Pyruvate carboxyltransferase domain maps to 8 to 269 (VLIFDTTLRD…YFNPFFGREP (262 aa)). Mn(2+) contacts are provided by aspartate 17, histidine 208, histidine 210, and asparagine 244. Residues 408 to 540 (QLRLVQVSCG…AVLADLRSGI (133 aa)) are regulatory domain.

This sequence belongs to the alpha-IPM synthase/homocitrate synthase family. LeuA type 1 subfamily. As to quaternary structure, homodimer. The cofactor is Mn(2+).

The protein resides in the cytoplasm. It catalyses the reaction 3-methyl-2-oxobutanoate + acetyl-CoA + H2O = (2S)-2-isopropylmalate + CoA + H(+). The protein operates within amino-acid biosynthesis; L-leucine biosynthesis; L-leucine from 3-methyl-2-oxobutanoate: step 1/4. Catalyzes the condensation of the acetyl group of acetyl-CoA with 3-methyl-2-oxobutanoate (2-ketoisovalerate) to form 3-carboxy-3-hydroxy-4-methylpentanoate (2-isopropylmalate). The polypeptide is 2-isopropylmalate synthase (Prochlorococcus marinus (strain MIT 9313)).